The chain runs to 160 residues: Putative NrdI-like protein (160 aa).

It belongs to the NrdI family.

This chain is Putative NrdI-like protein, found in Streptococcus pyogenes serotype M3 (strain ATCC BAA-595 / MGAS315).